The chain runs to 164 residues: FMN reductase (NADH) RutF (164 aa).

The protein belongs to the non-flavoprotein flavin reductase family. RutF subfamily.

The catalysed reaction is FMNH2 + NAD(+) = FMN + NADH + 2 H(+). Functionally, catalyzes the reduction of FMN to FMNH2 which is used to reduce pyrimidine by RutA via the Rut pathway. This Escherichia coli (strain K12 / MC4100 / BW2952) protein is FMN reductase (NADH) RutF.